The following is a 365-amino-acid chain: MDSFQPLFEQLFGSEWGVSLFLLAKNLLLILAIIIPLLLAVAYLTFAERKIIAFMQVRVGPNRVTFFGIPWLGGWGQPIADAVKAIMKEIIIPTGANKFLFLLAPILAITPALAAWAVVPFSPELVLADINAALLYILAMTSLGVYGVIIAGWASNSKYAFLGAMRSAAQVISYELAMGFALVCVLMMSSSLNLGDIVAGQQGGSFLNWYMIPLFPMFLVYFISGVAETNRLPFDVAEGESEIVAGFHVDYSGMAFTIFFLAEYANMILVATLASIMFLGGWLPPVDIIPFNLIPGVVWLLLKIAIMLFFFLWFRATFPRYRYDQIMRLGWKVFIPITLIWIVLLGAVMQLPEAALQSFPLNLWF.

Transmembrane regions (helical) follow at residues 27 to 47 (LLLI…LTFA), 99 to 119 (FLFL…WAVV), 133 to 153 (ALLY…IAGW), 168 to 188 (AAQV…VLMM), 206 to 226 (FLNW…ISGV), 268 to 288 (ILVA…PVDI), 294 to 314 (IPGV…FLWF), and 329 to 349 (LGWK…GAVM).

The protein belongs to the complex I subunit 1 family. As to quaternary structure, NDH-1 is composed of 14 different subunits. Subunits NuoA, H, J, K, L, M, N constitute the membrane sector of the complex.

The protein resides in the cell inner membrane. The enzyme catalyses a quinone + NADH + 5 H(+)(in) = a quinol + NAD(+) + 4 H(+)(out). Its function is as follows. NDH-1 shuttles electrons from NADH, via FMN and iron-sulfur (Fe-S) centers, to quinones in the respiratory chain. The immediate electron acceptor for the enzyme in this species is believed to be ubiquinone. Couples the redox reaction to proton translocation (for every two electrons transferred, four hydrogen ions are translocated across the cytoplasmic membrane), and thus conserves the redox energy in a proton gradient. This subunit may bind ubiquinone. The chain is NADH-quinone oxidoreductase subunit H from Nitrosomonas eutropha (strain DSM 101675 / C91 / Nm57).